Reading from the N-terminus, the 386-residue chain is Cytochrome b (386 aa).

A run of 4 helical transmembrane segments spans residues 32–52, 76–98, 113–133, and 179–199; these read FGSLLALCLGIQIVTGVTLAM, WLIRYLHANTASAFFFLVYLHMG, TWNIGVVIFIVMIVTAFLGYV, and FFSLHYLLPFILAALVLMHLI. Positions 82 and 96 each coordinate heme b. 2 residues coordinate heme b: His-183 and His-197. Position 202 (His-202) interacts with a ubiquinone. A run of 4 helical transmembrane segments spans residues 226–246, 290–310, 322–342, and 349–369; these read FLFKDLVTIFLFMLGLSIFVL, TLGVVAMLGAILILMALPYLD, LSKIAFYIFIANFLVLMILGA, and FIIFGQISTTLYFSYFIIITP.

This sequence belongs to the cytochrome b family. As to quaternary structure, fungal cytochrome b-c1 complex contains 10 subunits; 3 respiratory subunits, 2 core proteins and 5 low-molecular weight proteins. Cytochrome b-c1 complex is a homodimer. The cofactor is heme b.

It localises to the mitochondrion inner membrane. Functionally, component of the ubiquinol-cytochrome c reductase complex (complex III or cytochrome b-c1 complex) that is part of the mitochondrial respiratory chain. The b-c1 complex mediates electron transfer from ubiquinol to cytochrome c. Contributes to the generation of a proton gradient across the mitochondrial membrane that is then used for ATP synthesis. This chain is Cytochrome b (COB), found in Trichophyton rubrum (Athlete's foot fungus).